Here is a 184-residue protein sequence, read N- to C-terminus: tRNA (cytidine(56)-2'-O)-methyltransferase (184 aa).

Residues leucine 87, 112-116 (GAEKV), and 130-137 (VANQPHSE) contribute to the S-adenosyl-L-methionine site.

This sequence belongs to the aTrm56 family. In terms of assembly, homodimer.

Its subcellular location is the cytoplasm. It catalyses the reaction cytidine(56) in tRNA + S-adenosyl-L-methionine = 2'-O-methylcytidine(56) in tRNA + S-adenosyl-L-homocysteine + H(+). In terms of biological role, specifically catalyzes the AdoMet-dependent 2'-O-ribose methylation of cytidine at position 56 in tRNAs. This is tRNA (cytidine(56)-2'-O)-methyltransferase from Methanocorpusculum labreanum (strain ATCC 43576 / DSM 4855 / Z).